A 109-amino-acid polypeptide reads, in one-letter code: uncharacterized protein (109 aa).

This is an uncharacterized protein from Homo sapiens (Human).